The sequence spans 547 residues: Sterol carrier protein 2 (547 aa).

Phosphoserine occurs at positions 3 and 8. Lys-40 is modified (N6-succinyllysine). N6-acetyllysine; alternate is present on Lys-132. Lys-132 bears the N6-succinyllysine; alternate mark. Lys-168 carries the post-translational modification N6-succinyllysine. At Lys-177 the chain carries N6-acetyllysine. Lys-183 is subject to N6-acetyllysine; alternate. At Lys-183 the chain carries N6-succinyllysine; alternate. Lys-211 and Lys-282 each carry N6-succinyllysine. 5 positions are modified to N6-acetyllysine; alternate: Lys-341, Lys-432, Lys-438, Lys-443, and Lys-453. Residues Lys-341, Lys-432, Lys-438, Lys-443, and Lys-453 each carry the N6-succinyllysine; alternate modification. Residues 433–543 (ANLIFKEIEK…KLQSLQLQPD (111 aa)) enclose the SCP2 domain. Lys-464 is modified (N6-succinyllysine). Lys-470 carries the post-translational modification N6-acetyllysine; alternate. Position 470 is an N6-succinyllysine; alternate (Lys-470). An N6-succinyllysine modification is found at Lys-479. At Lys-491 the chain carries N6-acetyllysine. An N6-succinyllysine mark is found at Lys-492 and Lys-511. Ser-516 carries the phosphoserine modification. Residues Lys-522 and Lys-534 each carry the N6-succinyllysine modification. Ser-537 bears the Phosphoserine mark. Lys-544 carries the N6-succinyllysine modification. The Microbody targeting signal motif lies at 545-547 (AKL).

The protein in the N-terminal section; belongs to the thiolase-like superfamily. Thiolase family. Interacts with PEX5; the interaction is essential for peroxisomal import. In terms of processing, preSCP2, a protein with a molecular mass of about 15 kDa, is processed into its mature form (SCP2) by proteolytic cleavage of a 20 residue leader sequence after translocation into peroxisomes. As to expression, liver &gt; intestine &gt; brain &gt; lung, colon, stomach, spleen, kidney, heart and ovary. Expressed in liver (at protein level).

Its subcellular location is the peroxisome. The protein localises to the cytoplasm. The protein resides in the mitochondrion. It catalyses the reaction an acyl-CoA + acetyl-CoA = a 3-oxoacyl-CoA + CoA. The catalysed reaction is choloyl-CoA + propanoyl-CoA = 3alpha,7alpha,12alpha-trihydroxy-24-oxo-5beta-cholestan-26-oyl-CoA + CoA. It carries out the reaction 4,8,12-trimethyltridecanoyl-CoA + propanoyl-CoA = 3-oxopristanoyl-CoA + CoA. The enzyme catalyses hexanoyl-CoA + acetyl-CoA = 3-oxooctanoyl-CoA + CoA. It catalyses the reaction tetradecanoyl-CoA + acetyl-CoA = 3-oxohexadecanoyl-CoA + CoA. The catalysed reaction is 3-oxohexadecanedioyl-CoA + CoA = tetradecanedioyl-CoA + acetyl-CoA. It carries out the reaction propanoyl-CoA + tetradecanoyl-CoA = 3-oxo-2-methylhexadecanoyl-CoA + CoA. The enzyme catalyses butanoyl-CoA + acetyl-CoA = 3-oxohexanoyl-CoA + CoA. It catalyses the reaction octanoyl-CoA + acetyl-CoA = 3-oxodecanoyl-CoA + CoA. The catalysed reaction is decanoyl-CoA + acetyl-CoA = 3-oxododecanoyl-CoA + CoA. It carries out the reaction dodecanoyl-CoA + acetyl-CoA = 3-oxotetradecanoyl-CoA + CoA. The enzyme catalyses hexadecanoyl-CoA + acetyl-CoA = 3-oxooctadecanoyl-CoA + CoA. It catalyses the reaction 3-oxo-(9Z-octadecenoyl)-CoA + CoA = (7Z)-hexadecenoyl-CoA + acetyl-CoA. The catalysed reaction is 7-dehydrocholesterol(in) = 7-dehydrocholesterol(out). Functionally, plays a crucial role in the peroxisomal oxidation of branched-chain fatty acids. Catalyzes the last step of the peroxisomal beta-oxidation of branched chain fatty acids and the side chain of the bile acid intermediates di- and trihydroxycoprostanic acids (DHCA and THCA). Also active with medium and long straight chain 3-oxoacyl-CoAs. Stimulates the microsomal conversion of 7-dehydrocholesterol to cholesterol and transfers phosphatidylcholine and 7-dehydrocholesterol between membrances, in vitro. Isoforms SCP2 and SCPx cooperate in peroxisomal oxidation of certain naturally occurring tetramethyl-branched fatty acyl-CoAs. Mediates the transfer of all common phospholipids, cholesterol and gangliosides from the endoplasmic reticulum to the plasma membrane. May play a role in regulating steroidogenesis. Stimulates the microsomal conversion of 7-dehydrocholesterol to cholesterol. Also binds fatty acids and fatty acyl Coenzyme A (CoA) such as phytanoyl-CoA. Involved in the regulation phospholipid synthesis in endoplasmic reticulum enhancing the incorporation of exogenous fatty acid into glycerides. Seems to stimulate the rate-limiting step in phosphatidic acid formation mediated by GPAT3. Isoforms SCP2 and SCPx cooperate in peroxisomal oxidation of certain naturally occurring tetramethyl-branched fatty acyl-CoAs. In Rattus norvegicus (Rat), this protein is Sterol carrier protein 2.